Reading from the N-terminus, the 517-residue chain is Gamma-1-syntrophin (517 aa).

Positions 57–140 (TVTIRRQTVG…EVTLTVSFLK (84 aa)) constitute a PDZ domain. Residues 283–390 (QIVYMGWCEA…WERAFQTATF (108 aa)) enclose the PH domain.

The protein belongs to the syntrophin family. Isoform 1, but not isoform 2, interacts with the dystrophin protein DMD and related proteins DTNA and DTNB. Interacts with DGKZ. Brain specific. In CNS, it is expressed in the perikaryon and proximal portion of the neuronal processes. Strong expression in the hippocampus, neuron-rich dendate granule cells, and pyramidal cell layers. Highly expressed in neurons of the cerebral cortex. Also expressed in the cerebellar cortex, deep cerebellar nuclei, thalamus, and basal ganglia. No expression in muscle cells.

Its subcellular location is the cytoplasm. The protein resides in the cytoskeleton. The protein localises to the nucleus. Functionally, adapter protein that binds to and probably organizes the subcellular localization of a variety of proteins. May link various receptors to the actin cytoskeleton and the dystrophin glycoprotein complex. May participate in regulating the subcellular location of diacylglycerol kinase-zeta to ensure that diacylglycerol is rapidly inactivated following receptor activation. This chain is Gamma-1-syntrophin (SNTG1), found in Homo sapiens (Human).